Consider the following 1449-residue polypeptide: MAASSSSGRRRYDVFPSFSGVDVRKTFLSHLIEALDGKSINTFIDHGIERSRTIAPELISAIREARISIVIFSKNYASSTWCLNELVEIHKCFNDLGQMVIPVFYDVDPSEVRKQTGEFGKVFEKTCEVSKDKQPGDQKQRWVQALTDIANIAGEDLLNGPNEAHMVEKISNDVSNKLITRSKCFDDFVGIEAHIEAIKSVLCLESKEARMVGIWGQSGIGKSTIGRALFSQLSIQFPLRAFLTYKSTSGSDVSGMKLSWEKELLSEILGQKDIKIEHFGVVEQRLKHKKVLILLDDVDNLEFLKTLVGKAEWFGSGSRIIVITQDRQFLKAHDIDLVYEVKLPSQGLALTMLCRSAFGKDSPPDDFKELAFEVAKLAGHLPLGLNVLGSSLRRRGKKEWMEMMPRLRNGLNGDIMKTLRVSYDRLHQKDQDMFLCIACLFNGFEVSYVKDLLEDNVGLTMLSEKSLIRITPDGHIEMHNLLEKLGREIDRAKSKGNPGKRQFLTNFEDIHEVVTEKTGTETLLGIRLPFEEYFSTRPLLIDKESFKGMRNLQYLKIGDWSDGGQPQSLVYLPLKLRLLDWDDCPLKSLPSTFKAEYLVNLIMKYSKLEKLWEGTLPLGSLKKMNLLCSKNLKEIPDLSNARNLEELDLEGCESLVTLPSSIQNAIKLRKLHCSGVILIDLKSLEGMCNLEYLSVDCSRVEGTQGIVYFPSKLRLLLWNNCPLKRLHSNFKVEYLVKLRMENSDLEKLWDGTQPLGRLKQMFLRGSKYLKEIPDLSLAINLEEVDICKCESLVTFPSSMQNAIKLIYLDISDCKKLESFPTDLNLESLEYLNLTGCPNLRNFPAIKMGCSDVDFPEGRNEIVVEDCFWNKNLPAGLDYLDCLMRCMPCEFRPEYLVFLNVRCYKHEKLWEGIQSLGSLEEMDLSESENLTEIPDLSKATNLKHLYLNNCKSLVTLPSTIGNLQKLVRLEMKECTGLEVLPTDVNLSSLETLDLSGCSSLRTFPLISKSIKWLYLENTAIEEILDLSKATKLESLILNNCKSLVTLPSTIGNLQNLRRLYMKRCTGLEVLPTDVNLSSLGILDLSGCSSLRTFPLISTNIVWLYLENTAIGEVPCCIEDFTRLRVLLMYCCQRLKNISPNIFRLRSLMFADFTDCRGVIKALSDATVVATMEDSVSCVPLSENIEYTCERFWGELYGDGDWDLGTEYFSFRNCFKLDRDARELILRSCFKPVALPGGEIPKYFTYRAYGDSLTVTLPRSSLSQSFLRFKACLVVDPLSEGKGFYRYLEVNFGFNGKQYQKSFLEDEELEFCKTDHLFFCSFKFESEMTFNDVEFKFCCSNRIKECGVRLMYVSQETEYNQQTTRSKKRMRMTSGTSEEYINLAGDQIVADTGLAALNMELSLGEGEASSSTSLEGEALSVDYMITKEQDEDIPFLDPVSDGTWRSFYSAE.

The region spanning 10–178 (RRYDVFPSFS…KISNDVSNKL (169 aa)) is the TIR domain. Glu85 is an active-site residue. Positions 192-446 (EAHIEAIKSV…IACLFNGFEV (255 aa)) constitute an NB-ARC domain. LRR repeat units lie at residues 549–573 (MRNLQYLKIGDWSDGGQPQSLVYLP), 574–595 (LKLRLLDWDDCPLKSLPSTFKA), 597–618 (YLVNLIMKYSKLEKLWEGTLPL), 619–642 (GSLKKMNLLCSKNLKEIPDLSNAR), 644–665 (LEELDLEGCESLVTLPSSIQNA), 687–710 (MCNLEYLSVDCSRVEGTQGIVYFP), 712–732 (KLRLLLWNNCPLKRLHSNFKV), 733–755 (EYLVKLRMENSDLEKLWDGTQPL), 756–779 (GRLKQMFLRGSKYLKEIPDLSLAI), 802–825 (AIKLIYLDISDCKKLESFPTDLNL), 826–849 (ESLEYLNLTGCPNLRNFPAIKMGC), 915–939 (LGSLEEMDLSESENLTEIPDLSKAT), 941–962 (LKHLYLNNCKSLVTLPSTIGNL), 963–985 (QKLVRLEMKECTGLEVLPTDVNL), 986–1011 (SSLETLDLSGCSSLRTFPLISKSIKW), 1028–1052 (ATKLESLILNNCKSLVTLPSTIGNL), 1053–1077 (QNLRRLYMKRCTGLEVLPTDVNLSS), 1096–1119 (STNIVWLYLENTAIGEVPCCIEDF), and 1120–1143 (TRLRVLLMYCCQRLKNISPNIFRL).

Interacts with RSH1.

The enzyme catalyses NAD(+) + H2O = ADP-D-ribose + nicotinamide + H(+). Its function is as follows. TIR-NB-LRR receptor-like protein that confers resistance to the pathogen Hyaloperonospora arabidopsis isolate Noco2 (downy mildew disease). Confers resistance to H.arabidopsis isolates Emoy2, Emwa1 and Noco2. This chain is Disease resistance protein RPP5, found in Arabidopsis thaliana (Mouse-ear cress).